The following is a 241-amino-acid chain: Nuclear receptor-interacting protein 3 (241 aa).

The protein is Nuclear receptor-interacting protein 3 (NRIP3) of Homo sapiens (Human).